The chain runs to 62 residues: UPF0337 protein XAC0100 (62 aa).

This sequence belongs to the UPF0337 (CsbD) family.

The chain is UPF0337 protein XAC0100 from Xanthomonas axonopodis pv. citri (strain 306).